A 321-amino-acid chain; its full sequence is Malate dehydrogenase (321 aa).

NAD(+) is bound by residues 10 to 15 and D34; that span reads GGGQIG. Substrate-binding residues include R83 and R89. NAD(+) contacts are provided by residues N96 and 119-121; that span reads ISN. The substrate site is built by N121 and R152. The active-site Proton acceptor is H176.

This sequence belongs to the LDH/MDH superfamily. MDH type 3 family.

The catalysed reaction is (S)-malate + NAD(+) = oxaloacetate + NADH + H(+). In terms of biological role, catalyzes the reversible oxidation of malate to oxaloacetate. The protein is Malate dehydrogenase of Trichlorobacter lovleyi (strain ATCC BAA-1151 / DSM 17278 / SZ) (Geobacter lovleyi).